Consider the following 657-residue polypeptide: uncharacterized protein (657 aa).

The signal sequence occupies residues 1–26 (MFGKGLVKKSLLFFSGVSTMAVFLVS). C27 is lipidated: N-palmitoyl cysteine. C27 is lipidated: S-diacylglycerol cysteine. Disordered regions lie at residues 291–316 (ISPKQGSDNNSNLSIDDHKSGSFSST), 468–496 (RLSSDDTNTKKALKEVSTHKNGSDKDGII), and 516–563 (KSMT…KETN). The segment covering 294-304 (KQGSDNNSNLS) has biased composition (polar residues). Residues 469-495 (LSSDDTNTKKALKEVSTHKNGSDKDGI) are compositionally biased toward basic and acidic residues. Polar residues predominate over residues 516-525 (KSMTDNNSGT). Residues 526–545 (EQKKNLSEVDTKKKEKESKG) show a composition bias toward basic and acidic residues. Positions 546–559 (KTQSNGQDSGQQNG) are enriched in low complexity.

This sequence to T.pallidum TmpC.

The protein localises to the cell membrane. This is an uncharacterized protein from Mycoplasma pneumoniae (strain ATCC 29342 / M129 / Subtype 1) (Mycoplasmoides pneumoniae).